The following is a 317-amino-acid chain: Acetyl-coenzyme A carboxylase carboxyl transferase subunit alpha (317 aa).

Residues 32 to 293 (NLSEEIARLE…KRLLTSELQA (262 aa)) form the CoA carboxyltransferase C-terminal domain.

This sequence belongs to the AccA family. Acetyl-CoA carboxylase is a heterohexamer composed of biotin carboxyl carrier protein (AccB), biotin carboxylase (AccC) and two subunits each of ACCase subunit alpha (AccA) and ACCase subunit beta (AccD).

The protein resides in the cytoplasm. The enzyme catalyses N(6)-carboxybiotinyl-L-lysyl-[protein] + acetyl-CoA = N(6)-biotinyl-L-lysyl-[protein] + malonyl-CoA. It functions in the pathway lipid metabolism; malonyl-CoA biosynthesis; malonyl-CoA from acetyl-CoA: step 1/1. In terms of biological role, component of the acetyl coenzyme A carboxylase (ACC) complex. First, biotin carboxylase catalyzes the carboxylation of biotin on its carrier protein (BCCP) and then the CO(2) group is transferred by the carboxyltransferase to acetyl-CoA to form malonyl-CoA. The chain is Acetyl-coenzyme A carboxylase carboxyl transferase subunit alpha from Legionella pneumophila (strain Paris).